A 289-amino-acid chain; its full sequence is MLRDLFVKKKKYAAIPSEQVRKDVPDGVMTKCPKCKKIMYTKELLKNLKVCVNCGYHHPMNAWERLDSILDEGSFREYDKEMVSLNPLEFPGYEEKLENDRKKTKLNEAVVTGEGTIDDMLVVVAVMDSRFRMGSMGSVVGEKIARAVEKAYDLQVPFIIFTASGGARMQEGILSLMQMAKTSVALKKHSNAGGLFISVMTHPTTGGVSASFASLGDYNLAEPGALIGFAGRRVIEQTVREKLPEDFQTAEFLLEHGQLDAVVHRDDMRESLRKILEVHQGGGMAVWQS.

The CoA carboxyltransferase N-terminal domain maps to 28–289; the sequence is VMTKCPKCKK…QGGGMAVWQS (262 aa). Zn(2+) is bound by residues Cys-32, Cys-35, Cys-51, and Cys-54. The C4-type zinc finger occupies 32–54; it reads CPKCKKIMYTKELLKNLKVCVNC.

Belongs to the AccD/PCCB family. In terms of assembly, acetyl-CoA carboxylase is a heterohexamer composed of biotin carboxyl carrier protein (AccB), biotin carboxylase (AccC) and two subunits each of ACCase subunit alpha (AccA) and ACCase subunit beta (AccD). It depends on Zn(2+) as a cofactor.

The protein resides in the cytoplasm. The enzyme catalyses N(6)-carboxybiotinyl-L-lysyl-[protein] + acetyl-CoA = N(6)-biotinyl-L-lysyl-[protein] + malonyl-CoA. It participates in lipid metabolism; malonyl-CoA biosynthesis; malonyl-CoA from acetyl-CoA: step 1/1. Functionally, component of the acetyl coenzyme A carboxylase (ACC) complex. Biotin carboxylase (BC) catalyzes the carboxylation of biotin on its carrier protein (BCCP) and then the CO(2) group is transferred by the transcarboxylase to acetyl-CoA to form malonyl-CoA. The chain is Acetyl-coenzyme A carboxylase carboxyl transferase subunit beta from Bacillus mycoides (strain KBAB4) (Bacillus weihenstephanensis).